A 566-amino-acid chain; its full sequence is APC/C activator protein CDH1 (566 aa).

Positions 1 to 18 (MSTNLNPFMNNTPSSSPL) are enriched in polar residues. Residues 1-56 (MSTNLNPFMNNTPSSSPLKGSESKRVSKRPISSSSSASLLSSPSRRSRPSTVYGDR) form a disordered region. A compositionally biased stretch (low complexity) spans 29 to 44 (RPISSSSSASLLSSPS). The C-box motif lies at 55 to 61 (DRYIPSR). The residue at position 213 (S213) is a Phosphoserine. WD repeat units lie at residues 258–298 (PSLA…VVHL), 300–339 (DTEN…CIRT), 342–379 (GHID…PFFE), 383–422 (SHTQ…PILT), 425–467 (EHKA…KMSD), 469–510 (DSGS…PIAI), and 513–552 (GHSF…KAKV).

Belongs to the WD repeat CDC20/Fizzy family. Associates with the APC/C complex. Interacts with CLB2, CLB3, CDC5, HSL1, MSN5 and PSE1. Post-translationally, phosphorylated at multiple sites by CDC28, probably in its CLB5 bound form, in S, G2 and M phase of the cell cycle, thereby blocking the association of CDH1 to the APC/C and promoting nuclear export of CDH1 by MSN5. Dephosphorylated and activated by CDC14 in late anaphase, which may be necessary for PSE1-dependent nuclear localization.

The protein resides in the cytoplasm. It localises to the nucleus. Its function is as follows. Activator protein that regulates the ubiquitin ligase activity and substrate specificity of the anaphase promoting complex/cyclosome (APC/C). During telophase and in the subsequent G1 phase of the cell cycle, recognizes and binds proteins containing a destruction box (D-box) and an additional degradation signal termed the KEN box including ASE1, CDC20, the B-type cyclins CLB2 and CLB3, the polo-like kinase CDC5 and HSL1, and recruits them in a C-box-dependent manner to the APC/C for ubiquitination and subsequent proteolysis. Required for exit from mitosis, cytokinesis and formation of prereplicative complexes in G1. Probably is the target of a BUB2-dependent spindle checkpoint pathway. The sequence is that of APC/C activator protein CDH1 (CDH1) from Saccharomyces cerevisiae (strain ATCC 204508 / S288c) (Baker's yeast).